The following is a 478-amino-acid chain: ATP synthase subunit beta (478 aa).

ATP is bound at residue 151 to 158 (GGAGVGKT).

Belongs to the ATPase alpha/beta chains family. F-type ATPases have 2 components, CF(1) - the catalytic core - and CF(0) - the membrane proton channel. CF(1) has five subunits: alpha(3), beta(3), gamma(1), delta(1), epsilon(1). CF(0) has three main subunits: a(1), b(2) and c(9-12). The alpha and beta chains form an alternating ring which encloses part of the gamma chain. CF(1) is attached to CF(0) by a central stalk formed by the gamma and epsilon chains, while a peripheral stalk is formed by the delta and b chains.

It localises to the cell inner membrane. The catalysed reaction is ATP + H2O + 4 H(+)(in) = ADP + phosphate + 5 H(+)(out). In terms of biological role, produces ATP from ADP in the presence of a proton gradient across the membrane. The catalytic sites are hosted primarily by the beta subunits. This Xanthobacter autotrophicus (strain ATCC BAA-1158 / Py2) protein is ATP synthase subunit beta.